A 273-amino-acid chain; its full sequence is MSLQNIIETAFENRADITPTTVTPEVKEAVLETIRQLDSGKLRVAERLGVGEWKVNEWAKKAVLLSFRIQDNEVLNDGVNKYFDKVPTKFADWSEDEFKNAGFRAVPGAVARRGSFVAKNVVLMPSYVNIGAYVDEGAMVDTWATVGSCAQIGKNVHLSGGVGIGGVLEPLQAAPTIIEDNCFIGARSEIVEGVIVEEGSVISMGVFIGQSTKIFDRTTGEIYQGRVPAGSVVVSGSMPSKDGSHSLYCAVIVKRVDAQTRAKTSVNELLRGI.

Substrate contacts are provided by Arg104 and Asp141.

Belongs to the transferase hexapeptide repeat family. In terms of assembly, homotrimer.

The protein localises to the cytoplasm. It catalyses the reaction (S)-2,3,4,5-tetrahydrodipicolinate + succinyl-CoA + H2O = (S)-2-succinylamino-6-oxoheptanedioate + CoA. The protein operates within amino-acid biosynthesis; L-lysine biosynthesis via DAP pathway; LL-2,6-diaminopimelate from (S)-tetrahydrodipicolinate (succinylase route): step 1/3. The protein is 2,3,4,5-tetrahydropyridine-2,6-dicarboxylate N-succinyltransferase of Neisseria meningitidis serogroup B (strain ATCC BAA-335 / MC58).